A 61-amino-acid chain; its full sequence is Small ribosomal subunit protein uS14 (61 aa).

4 residues coordinate Zn(2+): Cys-24, Cys-27, Cys-40, and Cys-43.

It belongs to the universal ribosomal protein uS14 family. Zinc-binding uS14 subfamily. In terms of assembly, part of the 30S ribosomal subunit. Contacts proteins S3 and S10. It depends on Zn(2+) as a cofactor.

Functionally, binds 16S rRNA, required for the assembly of 30S particles and may also be responsible for determining the conformation of the 16S rRNA at the A site. The polypeptide is Small ribosomal subunit protein uS14 (Streptococcus mutans serotype c (strain ATCC 700610 / UA159)).